The following is a 207-amino-acid chain: Oligoribonuclease (207 aa).

An Exonuclease domain is found at 8-172; it reads LVWIDCEMTG…ADILESVREL (165 aa). The active site involves tyrosine 129.

It belongs to the oligoribonuclease family.

The protein localises to the cytoplasm. Its function is as follows. 3'-to-5' exoribonuclease specific for small oligoribonucleotides. This chain is Oligoribonuclease, found in Leifsonia xyli subsp. xyli (strain CTCB07).